A 615-amino-acid polypeptide reads, in one-letter code: Vitamin B12 transporter BtuB (615 aa).

The N-terminal stretch at 1-20 is a signal peptide; it reads MIKKVSLMTALSVTAFSGWA. Positions 25 to 32 match the TonB box motif; sequence DSLVVTAN. The TBDR plug domain maps to 37–151; it reads PANTVLAPTS…IGGVVNIITT (115 aa). Cyanocob(III)alamin-binding positions include serine 84, asparagine 91, and 109–110; that span reads VT. The 462-residue stretch at 154–615 folds into the TBDR beta-barrel domain; the sequence is KDGTTLNAGV…EYTLSGSYTF (462 aa). Beta stranded transmembrane passes span 157–164, 168–177, and 183–194; these read TTLNAGVG, YQNYGGSTQQ, and TRVTLAGDYTYT. The Ca(2+) site is built by aspartate 198, glutamine 210, aspartate 212, and aspartate 214. Beta stranded transmembrane passes span 216-226 and 231-247; these read YMNKTIYGALE and DQWS…NRTA. 2 residues coordinate Ca(2+): tyrosine 248 and aspartate 249. Alanine 250 is a cyanocob(III)alamin binding site. Aspartate 262 is a binding site for Ca(2+). 17 consecutive transmembrane segments (beta stranded) span residues 264–278, 280–297, 310–326, 329–338, 354–370, 372–382, 386–401, 404–418, 435–444, 450–459, 474–491, 495–510, 518–530, 536–551, 559–573, 586–597, and 603–615; these read RQLY…LRFN, GIFH…KDYN, TLDE…NSVD, HGNVGAGVDW, TNLR…QKFG, FTLEGAARSDD, FGRH…WEFI, YRFI…KAPN, ESKQWEGAFE, VSWRVSAYRN, YYNV…TASF, PLTH…ARNA, RRAK…QLDT, DWSL…YDTD, KVKM…LAVS, IANLFDKDYETV, and AGRE…SYTF. Residue threonine 310 participates in cyanocob(III)alamin binding. Arginine 518 provides a ligand contact to cyanocob(III)alamin. Residues 598-615 carry the TonB C-terminal box motif; that stretch reads YGYETAGREYTLSGSYTF.

It belongs to the TonB-dependent receptor family. BtuB (TC 1.B.14.3.1) subfamily.

It localises to the cell outer membrane. Involved in the active translocation of vitamin B12 (cyanocobalamin) across the outer membrane to the periplasmic space. It derives its energy for transport by interacting with the trans-periplasmic membrane protein TonB. This is Vitamin B12 transporter BtuB from Enterobacter sp. (strain 638).